The following is a 392-amino-acid chain: Formate-dependent phosphoribosylglycinamide formyltransferase (392 aa).

Residues 22–23 and E82 each bind N(1)-(5-phospho-beta-D-ribosyl)glycinamide; that span reads EL. ATP contacts are provided by residues R114, K155, 160-165, 195-198, and E203; these read SSGKGQ and EGVV. Positions 119-308 constitute an ATP-grasp domain; sequence RLAAEELQLP…EFALHVRAFL (190 aa). The Mg(2+) site is built by E267 and E279. Residues D286, K355, and 362-363 contribute to the N(1)-(5-phospho-beta-D-ribosyl)glycinamide site; that span reads RR.

It belongs to the PurK/PurT family. Homodimer.

It catalyses the reaction N(1)-(5-phospho-beta-D-ribosyl)glycinamide + formate + ATP = N(2)-formyl-N(1)-(5-phospho-beta-D-ribosyl)glycinamide + ADP + phosphate + H(+). The protein operates within purine metabolism; IMP biosynthesis via de novo pathway; N(2)-formyl-N(1)-(5-phospho-D-ribosyl)glycinamide from N(1)-(5-phospho-D-ribosyl)glycinamide (formate route): step 1/1. Its function is as follows. Involved in the de novo purine biosynthesis. Catalyzes the transfer of formate to 5-phospho-ribosyl-glycinamide (GAR), producing 5-phospho-ribosyl-N-formylglycinamide (FGAR). Formate is provided by PurU via hydrolysis of 10-formyl-tetrahydrofolate. The sequence is that of Formate-dependent phosphoribosylglycinamide formyltransferase from Klebsiella pneumoniae (strain 342).